The following is a 276-amino-acid chain: Diaminopimelate epimerase (276 aa).

Substrate is bound by residues Asn13, Gln46, and Asn66. Catalysis depends on Cys75, which acts as the Proton donor. Substrate contacts are provided by residues 76-77, Asn159, Asn192, and 210-211; these read GN and ER. The Proton acceptor role is filled by Cys219. Residue 220–221 participates in substrate binding; it reads GT.

It belongs to the diaminopimelate epimerase family. In terms of assembly, homodimer.

The protein resides in the cytoplasm. The enzyme catalyses (2S,6S)-2,6-diaminopimelate = meso-2,6-diaminopimelate. It functions in the pathway amino-acid biosynthesis; L-lysine biosynthesis via DAP pathway; DL-2,6-diaminopimelate from LL-2,6-diaminopimelate: step 1/1. Catalyzes the stereoinversion of LL-2,6-diaminopimelate (L,L-DAP) to meso-diaminopimelate (meso-DAP), a precursor of L-lysine and an essential component of the bacterial peptidoglycan. In Pseudomonas fluorescens, this protein is Diaminopimelate epimerase.